The chain runs to 106 residues: ATP-dependent Clp protease adapter protein ClpS (106 aa).

Positions 1 to 13 (MPRNTSHEHDHGL) are enriched in basic and acidic residues. The interval 1 to 20 (MPRNTSHEHDHGLMVEASKP) is disordered.

This sequence belongs to the ClpS family. Binds to the N-terminal domain of the chaperone ClpA.

Involved in the modulation of the specificity of the ClpAP-mediated ATP-dependent protein degradation. In Xanthomonas axonopodis pv. citri (strain 306), this protein is ATP-dependent Clp protease adapter protein ClpS.